An 89-amino-acid chain; its full sequence is Small ribosomal subunit protein uS15 (89 aa).

Belongs to the universal ribosomal protein uS15 family. Part of the 30S ribosomal subunit. Forms a bridge to the 50S subunit in the 70S ribosome, contacting the 23S rRNA.

In terms of biological role, one of the primary rRNA binding proteins, it binds directly to 16S rRNA where it helps nucleate assembly of the platform of the 30S subunit by binding and bridging several RNA helices of the 16S rRNA. Its function is as follows. Forms an intersubunit bridge (bridge B4) with the 23S rRNA of the 50S subunit in the ribosome. This chain is Small ribosomal subunit protein uS15, found in Shewanella baltica (strain OS185).